The primary structure comprises 77 residues: U8-lycotoxin-Ls1t (77 aa).

The first 20 residues, 1–20 (MKLIIFTGLVLFAIVSLIEA), serve as a signal peptide directing secretion. The propeptide occupies 21 to 26 (QAENEK).

This sequence belongs to the neurotoxin 19 (CSTX) family. 08 (U8-Lctx) subfamily. Post-translationally, contains 4 disulfide bonds. As to expression, expressed by the venom gland.

The protein resides in the secreted. In Lycosa singoriensis (Wolf spider), this protein is U8-lycotoxin-Ls1t.